A 1518-amino-acid polypeptide reads, in one-letter code: LNKLAIPNANVCGWMSVRDYKRQGCNLDLDDNIRVPFYVKDLPETLHEKIWQTVEAHKADAGFGRICSSSACKIAYTLQTDIHSIPRTVKILDALLEQERTKQAHFRSMTSQSCSSSNFSLSSITSAIRSKYAKDHTEENIGVLQMAKAQLLEFKNLNIDPSYPELVRNFGALECVHHQTKEGVSKALRLKGHWNKQLVTRDATLMLGVLGGGAWMIFSYLRDSFKEEVVHQGFNRRQRQKLKFRQARDNRMAREVYGDDSTMEDYFGSAYSKKGKSKGRTRGMGTKTRKFVNMYGYDPTDYNFVRFVDPLTGHTLDENPLMDINLVQEHFSQVRNDYLGDDKITMQHIMSNPGIVAYYIKDATQKALKVDLTPHNPLRVCDKTATIAGFPEREFELRQTGQPVLVEPNAIPQINEEGDEEVGHESKSLFRGLRDYNPIASSICHLTNASGTRQSEIYGLGFGGLIVTNQHLFKRNDGELTIRSHHGEFVVKDTKTLKLLPCKGRDIIIIRLPKDFPPFPRRLQFRTPTAEDRVCLIGSNFQTKSVSSTMSETSATYPVDNSHFWKHWISTKDGHCGLPIVSTRDGSILGLHSLANSTNTQNFYAAFPDNFETTYLANQDNDNWIKQWRYNPDEVCWGSLQLKRDVPQSPFTICKLLTDLDGEFVYNQAKTTHWLRDKLEGNLKAVGACPGQLVTKHVVKGKCTLFETYLLTHPEEREFFQPLMGAYQKSALNKDAYVKDLMKYSKSIVVGAVDCEQFERAVDVVISMLISKGFSECSYVTDPEEIFSALNMKAAVGALYSGKKRDYFKDTSELEKEEFVRASCKRLFMGKKGVWNGSLKAELRPKEKVEANKTRSFTAAPIDTLLGGKVCVDDFNNQFYSLNLHCPWSVGMTKFRGGWDKLLRALPDGWIYCDADGSQFDSSLSPYLINAVLNIRLAFMEEWDIGEQMLSNLYTEIVYTPIATPDGTIVKKFKGNNSGQPSTVVDNTLMVILAMTYSLLKLGYHPDTHECICRYFVNGDDLVLAVHPAYESIYDELQHHFSQLGLNYTFTTKTENKEDLWFMSHKGIMCEGMYIPKLEPERIVSILEWDRSSEPIHRLEAICASMVEAWGYKELLREIRKFYSWVLEQAPYNALSKDGKAPYIAETALKKLYTDTEASETEIERYLEAFYSNLTDEDESNVVVHQADEKEDDEEEVDAGRPLVTTTQQPIVTTTTQQTPITSTTLQATQAMFNPIFTPATTEPTTRTVPHTTTTTPPSFGVIGNEDTAPNASNAVVRTGRDRDVDAGSIGTFTVPRLKAMTSKLSLPKVKGKAIMNLNHLAFYSPAQVDLSNTRAPQSCFQTWYEGVRRDYDVTDDEMSIILNGLMVWCIENGTSPNINGMWVMMDGETQVEYPIKPLLDHAKPTFRQIMAHFSNVAEAYIEKRNYEKAYMPRYGIQRNLTDYSLARYAFDFYEMTSTTPVRAREAHIQMKAAALRNAQNRLFGLDGNVGTQEEDTERHTAGDVNRNMHNLLGMRGV.

Residues 273-280 (KKGKSKGR) carry the Nuclear localization signal motif. Residue Tyr-295 is modified to O-(5'-phospho-RNA)-tyrosine. The Peptidase C4 domain occupies 426–644 (SKSLFRGLRD…VCWGSLQLKR (219 aa)). Residues His-471, Asp-506, and Cys-576 each act as for nuclear inclusion protein A activity in the active site. In terms of domain architecture, RdRp catalytic spans 910 to 1034 (WIYCDADGSQ…AVHPAYESIY (125 aa)). Low complexity predominate over residues 1239–1258 (PATTEPTTRTVPHTTTTTPP). Residues 1239–1272 (PATTEPTTRTVPHTTTTTPPSFGVIGNEDTAPNA) form a disordered region.

Belongs to the potyviridae genome polyprotein family. Interacts with host eIF4E protein (via cap-binding region); this interaction mediates the translation of the VPg-viral RNA conjugates. Part of a complex that comprises VPg, RNA, host EIF4E and EIF4G; this interaction mediates the translation of the VPg-viral RNA conjugates. Post-translationally, VPg is uridylylated by the polymerase and is covalently attached to the 5'-end of the genomic RNA. This uridylylated form acts as a nucleotide-peptide primer for the polymerase. Genome polyprotein of potyviruses undergoes post-translational proteolytic processing by the main proteinase NIa-pro resulting in the production of at least ten individual proteins. The P1 proteinase and the HC-pro cleave only their respective C-termini autocatalytically. 6K1 is essential for proper proteolytic separation of P3 from CI.

The protein resides in the host nucleus. It is found in the virion. The enzyme catalyses Hydrolyzes glutaminyl bonds, and activity is further restricted by preferences for the amino acids in P6 - P1' that vary with the species of potyvirus, e.g. Glu-Xaa-Xaa-Tyr-Xaa-Gln-|-(Ser or Gly) for the enzyme from tobacco etch virus. The natural substrate is the viral polyprotein, but other proteins and oligopeptides containing the appropriate consensus sequence are also cleaved.. The catalysed reaction is RNA(n) + a ribonucleoside 5'-triphosphate = RNA(n+1) + diphosphate. In terms of biological role, indispensable for virus replication. Mediates the cap-independent, EIF4E-dependent translation of viral genomic RNAs. Binds to the cap-binding site of host EIF4E and thus interferes with the host EIF4E-dependent mRNA export and translation. VPg-RNA directly binds EIF4E and is a template for transcription. Also forms trimeric complexes with EIF4E-EIF4G, which are templates for translation. Functionally, has RNA-binding and proteolytic activities. Its function is as follows. An RNA-dependent RNA polymerase that plays an essential role in the virus replication. In terms of biological role, involved in aphid transmission, cell-to-cell and systemis movement, encapsidation of the viral RNA and in the regulation of viral RNA amplification. This chain is Genome polyprotein, found in Prunus armeniaca (Apricot).